Consider the following 467-residue polypeptide: AT-rich interactive domain-containing protein cfi-1 (467 aa).

Residues 1–56 are disordered; the sequence is MSVRIDEPQLFVSMSKEPTQETVNVGGHHDDSSSNCDERVDDQTEEQKSPPASPDL. The span at 27 to 48 shows a compositional bias: basic and acidic residues; sequence GHHDDSSSNCDERVDDQTEEQK. Positions 181-273 constitute an ARID domain; that stretch reads DVKRKEWLDD…YLYDYECEKE (93 aa). Residues 356-464 enclose the REKLES domain; the sequence is AILEAHQRNL…GVLFALDETV (109 aa). Positions 383–441 are disordered; that stretch reads LTACSNGNGGNIHNSGRESTSSNDSDIPAKRPKLENDVKTNGASSMRISTKHSDNSKTS. Residues 409 to 420 show a composition bias toward basic and acidic residues; sequence IPAKRPKLENDV. Residues 421–430 show a composition bias toward polar residues; sequence KTNGASSMRI.

Present in IL2 and URA neurons, and in AVD and PVC interneurons. Present in muscles from head and pharynx (at protein level).

Its subcellular location is the nucleus. Its function is as follows. Transcription factor. Regulates neuronal subtype identity. Involved in motor neuron fate determination and maintenance, acting as a transcriptional repressor to counteract gene activation by transcription factor unc-3 in a subset of motor neurons. Probably acts by binding to specific promoter elements. Promotes differentiation of URA sensory neurons and prevents them from expressing male-specific CEM neuronal features. Promotes differentiation of AVD and PVC interneurons and their glutamate receptor expression. In Caenorhabditis elegans, this protein is AT-rich interactive domain-containing protein cfi-1 (cfi-1).